The chain runs to 227 residues: Large ribosomal subunit protein uL3 (227 aa).

Residue glutamine 158 is modified to N5-methylglutamine.

Belongs to the universal ribosomal protein uL3 family. Part of the 50S ribosomal subunit. Forms a cluster with proteins L14 and L19. In terms of processing, methylated by PrmB.

One of the primary rRNA binding proteins, it binds directly near the 3'-end of the 23S rRNA, where it nucleates assembly of the 50S subunit. This Polaromonas sp. (strain JS666 / ATCC BAA-500) protein is Large ribosomal subunit protein uL3.